Here is a 377-residue protein sequence, read N- to C-terminus: DNA replication and repair protein RecF (377 aa).

30 to 37 (GPNGQGKT) contacts ATP.

It belongs to the RecF family.

Its subcellular location is the cytoplasm. In terms of biological role, the RecF protein is involved in DNA metabolism; it is required for DNA replication and normal SOS inducibility. RecF binds preferentially to single-stranded, linear DNA. It also seems to bind ATP. This chain is DNA replication and repair protein RecF, found in Thermobifida fusca (strain YX).